The primary structure comprises 346 residues: Phosphate acyltransferase (346 aa).

The protein belongs to the PlsX family. Homodimer. Probably interacts with PlsY.

Its subcellular location is the cytoplasm. The catalysed reaction is a fatty acyl-[ACP] + phosphate = an acyl phosphate + holo-[ACP]. Its pathway is lipid metabolism; phospholipid metabolism. Its function is as follows. Catalyzes the reversible formation of acyl-phosphate (acyl-PO(4)) from acyl-[acyl-carrier-protein] (acyl-ACP). This enzyme utilizes acyl-ACP as fatty acyl donor, but not acyl-CoA. The polypeptide is Phosphate acyltransferase (Geotalea uraniireducens (strain Rf4) (Geobacter uraniireducens)).